The primary structure comprises 671 residues: DNA ligase (671 aa).

Residues 35–39, 84–85, and Glu113 contribute to the NAD(+) site; these read DQQYD and SL. The N6-AMP-lysine intermediate role is filled by Lys115. Residues Arg136, Glu170, Lys285, and Lys309 each coordinate NAD(+). Residues Cys403, Cys406, Cys421, and Cys426 each contribute to the Zn(2+) site. A BRCT domain is found at 588-671; that stretch reads TTQTIFTNKK…QIIENSQIKL (84 aa).

This sequence belongs to the NAD-dependent DNA ligase family. LigA subfamily. Mg(2+) serves as cofactor. Mn(2+) is required as a cofactor.

It catalyses the reaction NAD(+) + (deoxyribonucleotide)n-3'-hydroxyl + 5'-phospho-(deoxyribonucleotide)m = (deoxyribonucleotide)n+m + AMP + beta-nicotinamide D-nucleotide.. DNA ligase that catalyzes the formation of phosphodiester linkages between 5'-phosphoryl and 3'-hydroxyl groups in double-stranded DNA using NAD as a coenzyme and as the energy source for the reaction. It is essential for DNA replication and repair of damaged DNA. The protein is DNA ligase of Onion yellows phytoplasma (strain OY-M).